A 522-amino-acid chain; its full sequence is Probable protein kinase UbiB (522 aa).

In terms of domain architecture, Protein kinase spans 119 to 497; the sequence is SFERVPVASA…QRRTNRLLQS (379 aa). Residues 125 to 133 and Lys-151 each bind ATP; that span reads VASASIAQV. Asp-286 (proton acceptor) is an active-site residue. The helical transmembrane segment at 496–516 threads the bilayer; the sequence is QSIIYGGMGFVLGLLALQFLI.

This sequence belongs to the ABC1 family. UbiB subfamily.

It localises to the cell inner membrane. Its pathway is cofactor biosynthesis; ubiquinone biosynthesis [regulation]. Its function is as follows. Is probably a protein kinase regulator of UbiI activity which is involved in aerobic coenzyme Q (ubiquinone) biosynthesis. This is Probable protein kinase UbiB from Paracidovorax citrulli (strain AAC00-1) (Acidovorax citrulli).